The primary structure comprises 276 residues: NAD kinase (276 aa).

Residue aspartate 61 is the Proton acceptor of the active site. NAD(+) contacts are provided by residues 61–62, arginine 66, 135–136, arginine 146, histidine 163, aspartate 165, and alanine 200; these read DG and NE.

This sequence belongs to the NAD kinase family. A divalent metal cation is required as a cofactor.

The protein resides in the cytoplasm. The catalysed reaction is NAD(+) + ATP = ADP + NADP(+) + H(+). In terms of biological role, involved in the regulation of the intracellular balance of NAD and NADP, and is a key enzyme in the biosynthesis of NADP. Catalyzes specifically the phosphorylation on 2'-hydroxyl of the adenosine moiety of NAD to yield NADP. The protein is NAD kinase of Chloroflexus aurantiacus (strain ATCC 29366 / DSM 635 / J-10-fl).